We begin with the raw amino-acid sequence, 221 residues long: Endo-1,4-beta-xylanase I (221 aa).

A signal peptide spans 1-30 (MVSFTSIITAAVAATGALAAPATDVSLVAR). The region spanning 31–219 (QNTPNGEGTH…STGNAQITVN (189 aa)) is the GH11 domain. E115 serves as the catalytic Nucleophile. Positions 126-157 (DPSSQSQNKGTVTSDGSSYKIAQSTRTNQPSI) are disordered. Catalysis depends on E206, which acts as the Proton donor.

The protein belongs to the glycosyl hydrolase 11 (cellulase G) family. In terms of processing, the N-terminus is blocked.

It is found in the secreted. It carries out the reaction Endohydrolysis of (1-&gt;4)-beta-D-xylosidic linkages in xylans.. Its pathway is glycan degradation; xylan degradation. Its function is as follows. Major xylan-degrading enzyme. Contributes to the hydrolysis of arabinoxylan, the major component of maize cell-walls. The sequence is that of Endo-1,4-beta-xylanase I (XYL1) from Cochliobolus carbonum (Maize leaf spot fungus).